The following is a 113-amino-acid chain: MSEEKIVNTEAAPEAVAERPARAERSERPERPAKGPFGKKRFESRRKVCKLCAEKIENVDYKNFQFIKSFTMDSGKILSRRITGTCAKHQRQIASAVKRDRNLAILPYSLPKK.

The segment at 1-41 (MSEEKIVNTEAAPEAVAERPARAERSERPERPAKGPFGKKR) is disordered. The segment covering 16-33 (VAERPARAERSERPERPA) has biased composition (basic and acidic residues).

It belongs to the bacterial ribosomal protein bS18 family. In terms of assembly, part of the 30S ribosomal subunit. Forms a tight heterodimer with protein bS6.

In terms of biological role, binds as a heterodimer with protein bS6 to the central domain of the 16S rRNA, where it helps stabilize the platform of the 30S subunit. The polypeptide is Small ribosomal subunit protein bS18 (Elusimicrobium minutum (strain Pei191)).